The sequence spans 113 residues: Retrotransposon Gag-like protein 8B (113 aa).

This sequence belongs to the FAM127 family.

The polypeptide is Retrotransposon Gag-like protein 8B (RTL8B) (Homo sapiens (Human)).